We begin with the raw amino-acid sequence, 305 residues long: Energy-coupling factor transporter ATP-binding protein EcfA2 (305 aa).

One can recognise an ABC transporter domain in the interval 13–262 (LQNVDITFTN…KNLLQELLIE (250 aa)). 55–62 (GSTGSGKS) contacts ATP.

It belongs to the ABC transporter superfamily. Energy-coupling factor EcfA family. Forms a stable energy-coupling factor (ECF) transporter complex composed of 2 membrane-embedded substrate-binding proteins (S component), 2 ATP-binding proteins (A component) and 2 transmembrane proteins (T component).

The protein resides in the cell membrane. Functionally, ATP-binding (A) component of a common energy-coupling factor (ECF) ABC-transporter complex. Unlike classic ABC transporters this ECF transporter provides the energy necessary to transport a number of different substrates. The polypeptide is Energy-coupling factor transporter ATP-binding protein EcfA2 (Spiroplasma kunkelii).